Reading from the N-terminus, the 110-residue chain is Flagellar hook-basal body complex protein FliE (110 aa).

Belongs to the FliE family.

The protein localises to the bacterial flagellum basal body. This Pseudomonas entomophila (strain L48) protein is Flagellar hook-basal body complex protein FliE.